The chain runs to 811 residues: Bifunctional enzyme MurC/Ddl (811 aa).

The UDP-N-acetylmuramate--alanine ligase stretch occupies residues 1–450 (MNRKNHYHFI…GNALKDFEPK (450 aa)). Residues 111 to 117 (GSHGKTT) and 607 to 662 (LETF…SREI) each bind ATP. Residues 451–811 (KLSVGVVCGG…NKQCLLTAKS (361 aa)) are D-alanine--D-alanine ligase. The ATP-grasp domain occupies 574-785 (KRLAASVGVP…FEQIVHQLII (212 aa)). Residues Asp-739, Glu-752, and Asn-754 each coordinate Mg(2+).

The protein in the N-terminal section; belongs to the MurCDEF family. In the C-terminal section; belongs to the D-alanine--D-alanine ligase family. Mg(2+) is required as a cofactor. The cofactor is Mn(2+).

The protein localises to the cytoplasm. It carries out the reaction UDP-N-acetyl-alpha-D-muramate + L-alanine + ATP = UDP-N-acetyl-alpha-D-muramoyl-L-alanine + ADP + phosphate + H(+). The catalysed reaction is 2 D-alanine + ATP = D-alanyl-D-alanine + ADP + phosphate + H(+). It participates in cell wall biogenesis; peptidoglycan biosynthesis. The protein is Bifunctional enzyme MurC/Ddl (murC/ddlA) of Chlamydia caviae (strain ATCC VR-813 / DSM 19441 / 03DC25 / GPIC) (Chlamydophila caviae).